Reading from the N-terminus, the 440-residue chain is Trigger factor (440 aa).

The 86-residue stretch at 163-248 (GEIVSVTFEA…VHVIKERTLP (86 aa)) folds into the PPIase FKBP-type domain.

This sequence belongs to the FKBP-type PPIase family. Tig subfamily.

The protein resides in the cytoplasm. It catalyses the reaction [protein]-peptidylproline (omega=180) = [protein]-peptidylproline (omega=0). In terms of biological role, involved in protein export. Acts as a chaperone by maintaining the newly synthesized protein in an open conformation. Functions as a peptidyl-prolyl cis-trans isomerase. This Solidesulfovibrio magneticus (strain ATCC 700980 / DSM 13731 / RS-1) (Desulfovibrio magneticus) protein is Trigger factor.